The primary structure comprises 117 residues: Non-specific lipid-transfer protein (117 aa).

The signal sequence occupies residues 1–26 (MACSAMTKLALVVALCMVVSVPIAQA). 4 disulfides stabilise this stretch: cysteine 29-cysteine 76, cysteine 39-cysteine 53, cysteine 54-cysteine 99, and cysteine 74-cysteine 113.

It belongs to the plant LTP family.

Plant non-specific lipid-transfer proteins transfer phospholipids as well as galactolipids across membranes. May play a role in wax or cutin deposition in the cell walls of expanding epidermal cells and certain secretory tissues. In Prunus avium (Cherry), this protein is Non-specific lipid-transfer protein.